Consider the following 338-residue polypeptide: Lipoate-protein ligase A (338 aa).

A BPL/LPL catalytic domain is found at 29–216 (PATQRVLFLW…AFFAHYGERV (188 aa)). ATP-binding positions include Arg71, 76–79 (GAVF), and Lys134. Lys134 contributes to the (R)-lipoate binding site.

It belongs to the LplA family. Monomer.

The protein localises to the cytoplasm. It catalyses the reaction L-lysyl-[lipoyl-carrier protein] + (R)-lipoate + ATP = N(6)-[(R)-lipoyl]-L-lysyl-[lipoyl-carrier protein] + AMP + diphosphate + H(+). The protein operates within protein modification; protein lipoylation via exogenous pathway; protein N(6)-(lipoyl)lysine from lipoate: step 1/2. Its pathway is protein modification; protein lipoylation via exogenous pathway; protein N(6)-(lipoyl)lysine from lipoate: step 2/2. Functionally, catalyzes both the ATP-dependent activation of exogenously supplied lipoate to lipoyl-AMP and the transfer of the activated lipoyl onto the lipoyl domains of lipoate-dependent enzymes. The polypeptide is Lipoate-protein ligase A (Salmonella paratyphi C (strain RKS4594)).